The primary structure comprises 1431 residues: Stabilin-2 (1431 aa).

Topologically, residues 1–1322 are extracellular; the sequence is SLPSLLTRLE…PPTAATAAHS (1322 aa). Residues 2–130 enclose the FAS1 domain; that stretch reads LPSLLTRLEQ…GVIHGLEKVL (129 aa). N112 and N140 each carry an N-linked (GlcNAc...) asparagine glycan. Residues 207-272 form the Laminin EGF-like 1 domain; the sequence is PQCQACPGRG…CSCVHGRCSQ (66 aa). Disulfide bonds link C212/C226, C220/C236, C238/C247, C259/C270, C263/C280, C282/C291, C300/C310, C304/C320, C322/C333, C339/C352, C346/C362, C364/C375, C381/C394, C388/C404, C406/C417, C423/C436, C430/C446, and C448/C459. N231 and N243 each carry an N-linked (GlcNAc...) asparagine glycan. EGF-like domains are found at residues 296–334, 335–376, 377–418, and 419–460; these read TTDN…TVCT, AINA…IVCL, EINP…KVCS, and LINV…IVCR. N-linked (GlcNAc...) asparagine glycosylation is present at N301. N329 carries N-linked (GlcNAc...) asparagine glycosylation. N-linked (GlcNAc...) asparagine glycosylation occurs at N437. FAS1 domains lie at 460–588 and 604–745; these read RGSI…DKLL and VLQN…DCLL. N-linked (GlcNAc...) asparagine glycosylation is present at N607. The Laminin EGF-like 2 domain maps to 822 to 887; the sequence is PDCQACPGGP…SCSEHGQCDE (66 aa). Intrachain disulfides connect C827/C841, C835/C851, C853/C862, C874/C885, C879/C895, and C897/C906. N-linked (GlcNAc...) asparagine glycosylation is present at N858. Residue N929 is glycosylated (N-linked (GlcNAc...) asparagine). 2 consecutive EGF-like domains span residues 947 to 987 and 988 to 1030; these read VVDF…YSCI and EIDP…VDCE. 8 cysteine pairs are disulfide-bonded: C951/C964, C958/C973, C975/C986, C992/C1006, C1000/C1016, C1018/C1029, C1085/C1154, and C1109/C1130. In terms of domain architecture, Link spans 1063 to 1156; that stretch reads GVFHLRSPLG…SEMWDVFCYR (94 aa). Residues N1145, N1161, N1233, N1249, and N1258 are each glycosylated (N-linked (GlcNAc...) asparagine). In terms of domain architecture, FAS1 4 spans 1176-1310; it reads SGNLLQVLMS…GILHIISEPL (135 aa). Residues 1323–1343 form a helical membrane-spanning segment; sequence GLGTGIFCAVVLVTGAIALAA. The Cytoplasmic segment spans residues 1344-1431; sequence YSYFRLKQRT…QQATTVTVPR (88 aa). The interaction with TMSB4X stretch occupies residues 1368–1378; it reads WLLASSSPRIS.

Interacts with GULP1, heparin, alpha-M/beta-2 integrin (ITGAM and ITGB2), and thymosin beta 4 (TMSB4X). Glycosylated. In terms of processing, proteolytically processed to yield a 175 kDa protein. As to expression, initially expressed in all vascular cells, including those of sinusoidal-like structures, vitellin veins, and hepatic veins or sinus venosus, in E13.5 fetal liver. The expression then progressively disappears in the portal and hepatic veins, but the expression in sinusoidals endothelial cells (SECs) is retained and becomes stronger during development.

The protein resides in the cytoplasm. It localises to the cell membrane. Functionally, phosphatidylserine receptor that enhances the engulfment of apoptotic cells. Hyaluronan receptor that binds to and mediates endocytosis of hyaluronic acid (HA). Also acts, in different species, as a primary systemic scavenger receptor for heparin (Hep), chondroitin sulfate (CS), dermatan sulfate (DS), nonglycosaminoglycan (GAG), acetylated low-density lipoprotein (AcLDL), pro-collagen propeptides and advanced glycation end products (AGE). May serve to maintain tissue integrity by supporting extracellular matrix turnover or it may contribute to maintaining fluidity of bodily liquids by resorption of hyaluronan. Counter receptor which plays an important role in lymphocyte recruitment in the hepatic vasculature. Binds to both Gram-positive and Gram-negative bacteria and may play a role in defense against bacterial infection. The proteolytically processed 175 kDa form also functions as an endocytosis receptor for heparin internalization as well as HA and CS. This chain is Stabilin-2, found in Rattus norvegicus (Rat).